A 179-amino-acid polypeptide reads, in one-letter code: Natural killer cells antigen CD94 (179 aa).

The Cytoplasmic portion of the chain corresponds to 1-10 (MAVSRITRWR). A helical; Signal-anchor for type II membrane protein membrane pass occupies residues 11–31 (LMSMFFGIKCLFLIVALGVLV). The Extracellular portion of the chain corresponds to 32-179 (KNSFTIQNIQ…NRFICKQLPT (148 aa)). Disulfide bonds link C58–C70, C61–C72, C89–C174, and C152–C166. The region spanning 68–175 (HQCSCYFISK…CENKNRFICK (108 aa)) is the C-type lectin domain. A glycan (N-linked (GlcNAc...) asparagine) is linked at N93.

As to quaternary structure, can form disulfide-bonded heterodimer with NKG2 family members KLRC1 and KLRC2. KLRD1-KLRC1 heterodimer interacts with peptide-bound MHC-E-B2M heterotrimeric complex. KLRD1 plays a prominent role in directly interacting with MHC-E. KLRD1-KLRC1 interacts with much higher affinity with peptide-bound MHC-E-B2M than KLRD1-KLRC2. Interacts with the adapter protein TYROBP/DAP12; this interaction is required for cell surface expression and cell activation.

It localises to the cell membrane. Functionally, immune receptor involved in self-nonself discrimination. In complex with KLRC1 or KLRC2 on cytotoxic and regulatory lymphocyte subsets, recognizes non-classical major histocompatibility (MHC) class Ib molecule MHC-E loaded with self-peptides derived from the signal sequence of classical MHC class Ia and non-classical MHC class Ib molecules. Enables cytotoxic cells to monitor the expression of MHC class I molecules in healthy cells and to tolerate self. Primarily functions as a ligand binding subunit as it lacks the capacity to signal. In terms of biological role, KLRD1-KLRC1 acts as an immune inhibitory receptor. Key inhibitory receptor on natural killer (NK) cells that regulates their activation and effector functions. Dominantly counteracts T cell receptor signaling on a subset of memory/effector CD8-positive T cells as part of an antigen-driven response to avoid autoimmunity. On intraepithelial CD8-positive gamma-delta regulatory T cells triggers TGFB1 secretion, which in turn limits the cytotoxic programming of intraepithelial CD8-positive alpha-beta T cells, distinguishing harmless from pathogenic antigens. In MHC-E-rich tumor microenvironment, acts as an immune inhibitory checkpoint and may contribute to progressive loss of effector functions of NK cells and tumor-specific T cells, a state known as cell exhaustion. Upon MHC-E-peptide binding, transmits intracellular signals through KLRC1 immunoreceptor tyrosine-based inhibition motifs (ITIMs) by recruiting INPP5D/SHIP-1 and INPPL1/SHIP-2 tyrosine phosphatases to ITIMs, and ultimately opposing signals transmitted by activating receptors through dephosphorylation of proximal signaling molecules. Its function is as follows. KLRD1-KLRC2 acts as an immune activating receptor. On cytotoxic lymphocyte subsets recognizes MHC-E loaded with signal sequence-derived peptides from non-classical MHC class Ib MHC-G molecules, likely playing a role in the generation and effector functions of adaptive NK cells and in maternal-fetal tolerance during pregnancy. Regulates the effector functions of terminally differentiated cytotoxic lymphocyte subsets, and in particular may play a role in adaptive NK cell response to viral infection. Upon MHC-E-peptide binding, transmits intracellular signals via the adapter protein TYROBP/DAP12, triggering the phosphorylation of proximal signaling molecules and cell activation. The protein is Natural killer cells antigen CD94 (Klrd1) of Rattus norvegicus (Rat).